We begin with the raw amino-acid sequence, 340 residues long: MEYKLNKYIHKINTDPKSIYLNKIAKYYDSSIPIQVGGLRLNDFDSLVKFLKQAYDKAPTETSNKYLVILYGPPASGKSISRYIASYWIQELFKETESIENIYKSFIDTGIDEITYDIETPTGKRIIDLLKENIDNKLGNDKSIENAKKNISLLASSSWDIYRTNRPDYVSELLYYFAIFLNKNIFLETTGSSIPYLERIINLLSFYGYIPIVVYPFINDVSILYNRSIQRGLKEGRFLRCDTSFGLASQMQISLANYPKIKNIVSQYKNYLIYQYNSNFSNEITKNIYSFNFSSLGDYMLEFKCKIETIDDKITQNNIIDITSNNYDKALNLNLNCGEN.

The protein localises to the virion. This is an uncharacterized protein from Acanthamoeba polyphaga (Amoeba).